The sequence spans 505 residues: Argininosuccinate lyase (505 aa).

It belongs to the lyase 1 family. Argininosuccinate lyase subfamily.

It localises to the cytoplasm. The enzyme catalyses 2-(N(omega)-L-arginino)succinate = fumarate + L-arginine. The protein operates within amino-acid biosynthesis; L-arginine biosynthesis; L-arginine from L-ornithine and carbamoyl phosphate: step 3/3. The chain is Argininosuccinate lyase from Rhodococcoides fascians (Rhodococcus fascians).